The sequence spans 487 residues: Beta-barrel assembly-enhancing protease (487 aa).

The first 27 residues, 1–27 (MFRQLKKNLVATLIAALALGQVAPAFA), serve as a signal peptide directing secretion. His-136 provides a ligand contact to Zn(2+). Glu-137 is an active-site residue. 2 residues coordinate Zn(2+): His-140 and Glu-201. Asp-205 functions as the Proton donor in the catalytic mechanism. 2 TPR repeats span residues 309–342 (HAAQ…EPNN) and 427–460 (DQEL…AKLG).

The protein belongs to the peptidase M48 family. BepA subfamily. Requires Zn(2+) as cofactor.

The protein resides in the periplasm. Its function is as follows. Functions both as a chaperone and a metalloprotease. Maintains the integrity of the outer membrane by promoting either the assembly or the elimination of outer membrane proteins, depending on their folding state. The polypeptide is Beta-barrel assembly-enhancing protease (Salmonella typhi).